The primary structure comprises 288 residues: MSQFSFTKMHGLGNSYIYVNMFEEQIPEEDLALVAEKVSNINTGIGADGMILICPSDVAPVKMRMFNNDGSEGKSCGNGLRCVAKYAYEHKLVEDTVFTIETLAGIVTAEVTVEEGKVTLAKIDMGAPRLTRAEIPMLGEGETPFIRENFLYNNHRYAFTAVSMGNPHAVIFVDDVDQAPLTTLGPVLETHEMFPERVNVEFIEILNEEEMNFRVWERGSGVTQACGTGACAAVVASILNGKMERGKEITVHLAGGDLMIAWTEEGNVLMKGPAEVICRGVYEYKIEA.

2 residues coordinate substrate: Asn14 and Asn67. Cys76 (proton donor) is an active-site residue. Residues 77–78 (GN), Asn166, Asn199, and 217–218 (ER) each bind substrate. The Proton acceptor role is filled by Cys226. 227-228 (GT) lines the substrate pocket.

The protein belongs to the diaminopimelate epimerase family. As to quaternary structure, homodimer.

Its subcellular location is the cytoplasm. It carries out the reaction (2S,6S)-2,6-diaminopimelate = meso-2,6-diaminopimelate. It functions in the pathway amino-acid biosynthesis; L-lysine biosynthesis via DAP pathway; DL-2,6-diaminopimelate from LL-2,6-diaminopimelate: step 1/1. Functionally, catalyzes the stereoinversion of LL-2,6-diaminopimelate (L,L-DAP) to meso-diaminopimelate (meso-DAP), a precursor of L-lysine and an essential component of the bacterial peptidoglycan. This is Diaminopimelate epimerase from Bacillus cereus (strain ATCC 10987 / NRS 248).